Consider the following 155-residue polypeptide: DNA gyrase inhibitor (155 aa).

This sequence belongs to the DNA gyrase inhibitor family. Interacts with DNA gyrase.

Its subcellular location is the cytoplasm. Its function is as follows. Inhibits the supercoiling activity of DNA gyrase. Acts by inhibiting DNA gyrase at an early step, prior to (or at the step of) binding of DNA by the gyrase. It protects cells against toxins that target DNA gyrase, by inhibiting activity of these toxins and reducing the formation of lethal double-strand breaks in the cell. The protein is DNA gyrase inhibitor of Citrobacter koseri (strain ATCC BAA-895 / CDC 4225-83 / SGSC4696).